A 386-amino-acid chain; its full sequence is Succinate--CoA ligase [ADP-forming] subunit beta (386 aa).

An ATP-grasp domain is found at 9–244 (KELLKQFGVP…LDEEDPAEIE (236 aa)). Residues lysine 46, 53–55 (GRG), glutamate 99, alanine 102, and glutamate 107 each bind ATP. The Mg(2+) site is built by asparagine 199 and aspartate 213. Substrate contacts are provided by residues asparagine 264 and 321–323 (GIM).

This sequence belongs to the succinate/malate CoA ligase beta subunit family. In terms of assembly, heterotetramer of two alpha and two beta subunits. Mg(2+) serves as cofactor.

The enzyme catalyses succinate + ATP + CoA = succinyl-CoA + ADP + phosphate. The catalysed reaction is GTP + succinate + CoA = succinyl-CoA + GDP + phosphate. It functions in the pathway carbohydrate metabolism; tricarboxylic acid cycle; succinate from succinyl-CoA (ligase route): step 1/1. Its function is as follows. Succinyl-CoA synthetase functions in the citric acid cycle (TCA), coupling the hydrolysis of succinyl-CoA to the synthesis of either ATP or GTP and thus represents the only step of substrate-level phosphorylation in the TCA. The beta subunit provides nucleotide specificity of the enzyme and binds the substrate succinate, while the binding sites for coenzyme A and phosphate are found in the alpha subunit. This Bordetella petrii (strain ATCC BAA-461 / DSM 12804 / CCUG 43448) protein is Succinate--CoA ligase [ADP-forming] subunit beta.